A 303-amino-acid polypeptide reads, in one-letter code: Acetylxylan esterase A (303 aa).

The first 23 residues, 1–23 (MLSTHLLFLATTLLTSLFHPIAA), serve as a signal peptide directing secretion. Residue Ser-147 is the Charge relay system of the active site. N-linked (GlcNAc...) asparagine glycosylation is present at Asn-189.

This sequence belongs to the carbohydrate esterase 1 (CE1) family. AxeA subfamily. Monomer. In terms of processing, glycosylated.

Its subcellular location is the secreted. The catalysed reaction is Deacetylation of xylans and xylo-oligosaccharides.. Its pathway is glycan degradation; xylan degradation. Acetylxylan esterase involved in the hydrolysis of xylan, a major structural heterogeneous polysaccharide found in plant biomass representing the second most abundant polysaccharide in the biosphere, after cellulose. Degrades acetylated xylans by cleaving acetyl side groups from the hetero-xylan backbone. This is Acetylxylan esterase A (axeA) from Aspergillus ficuum.